Consider the following 479-residue polypeptide: Cyclic AMP-responsive element-binding protein 3-like protein 3 (479 aa).

Topologically, residues 1–317 are cytoplasmic; sequence MDGDIAAGKM…QSTSKPAHAG (317 aa). Positions 67–144 are disordered; that stretch reads CILGPGDSDP…CPEPPRTQVQ (78 aa). Residues 98-110 are compositionally biased toward polar residues; that stretch reads PQDTPPRSGTEPA. The bZIP domain occupies 239 to 302; the sequence is VLKKIRRKIR…LSLLEQLKHL (64 aa). Positions 241-270 are basic motif; that stretch reads KKIRRKIRNKQSAQESRKKKKEYIDGLENR. The leucine-zipper stretch occupies residues 281–302; the sequence is LQRKVLHLEKQNLSLLEQLKHL. Lys-290 participates in a covalent cross-link: Glycyl lysine isopeptide (Lys-Gly) (interchain with G-Cter in ubiquitin). The chain crosses the membrane as a helical; Signal-anchor for type II membrane protein span at residues 318–338; it reads TCIAVLLLSFALIILPSISPF. Residues 339–479 are Lumenal-facing; that stretch reads NSNKVDSPGD…RLVQDALGVL (141 aa). Asn-411, Asn-418, and Asn-425 each carry an N-linked (GlcNAc...) asparagine glycan.

This sequence belongs to the bZIP family. ATF subfamily. Binds DNA as a dimer. May form homodimers. Interacts with ATF6. Interacts with SYNV1/HRD1; this interaction leads to CREB3L3 ubiquitination and proteasomal degradation. In terms of processing, following ER stress a fragment containing the cytoplasmic transcription factor domain is released by proteolysis. The cleavage seems to be performed sequentially by site-1 and site-2 proteases. Post-translationally, N-glycosylation is required for optimal proteolytic activation. Ubiquitinated at Lys-290 by SYNV1/HRD1 via 'Lys-27'-linked ubiquitin. As to expression, expressed in adult liver (at protein level) and small intestine.

It localises to the endoplasmic reticulum membrane. Its subcellular location is the nucleus. Functionally, transcription factor that may act during endoplasmic reticulum (ER) stress by activating unfolded protein response target genes. Activated in response to cAMP stimulation. Binds to the cAMP response element (CRE). Activates transcription through box-B element. Activates transcription through CRE. May function synergistically with ATF6. In acute inflammatory response, may activate expression of acute phase response (APR) genes. May be involved in growth suppression. Regulates FGF21 transcription. Plays a crucial role in the regulation of triglyceride metabolism and is required for the maintenance of normal plasma triglyceride concentrations. This Mus musculus (Mouse) protein is Cyclic AMP-responsive element-binding protein 3-like protein 3 (Creb3l3).